The sequence spans 404 residues: Methyltransferase-like protein 22 (404 aa).

2 disordered regions span residues 60-102 (TDSG…SLQA) and 115-145 (QLDE…DKVH). A compositionally biased stretch (basic and acidic residues) spans 68–78 (SHRDVHTKEPP). Residues 79–88 (SAETGSTGSP) show a composition bias toward low complexity. Ser-132 is subject to Phosphoserine.

The protein belongs to the methyltransferase superfamily. METTL22 family. In terms of assembly, interacts with members of the heat shock protein 90 and 70 families; these proteins probably are methylation substrates.

The protein localises to the nucleus. It catalyses the reaction L-lysyl-[protein] + 3 S-adenosyl-L-methionine = N(6),N(6),N(6)-trimethyl-L-lysyl-[protein] + 3 S-adenosyl-L-homocysteine + 3 H(+). Functionally, protein N-lysine methyltransferase. Trimethylates KIN at Lys-135 (in vitro). In Homo sapiens (Human), this protein is Methyltransferase-like protein 22 (METTL22).